The sequence spans 311 residues: Bifunctional protein FolD (311 aa).

Residue 174–176 (GKG) coordinates NADP(+).

This sequence belongs to the tetrahydrofolate dehydrogenase/cyclohydrolase family. Homodimer.

The catalysed reaction is (6R)-5,10-methylene-5,6,7,8-tetrahydrofolate + NADP(+) = (6R)-5,10-methenyltetrahydrofolate + NADPH. It carries out the reaction (6R)-5,10-methenyltetrahydrofolate + H2O = (6R)-10-formyltetrahydrofolate + H(+). Its pathway is one-carbon metabolism; tetrahydrofolate interconversion. Catalyzes the oxidation of 5,10-methylenetetrahydrofolate to 5,10-methenyltetrahydrofolate and then the hydrolysis of 5,10-methenyltetrahydrofolate to 10-formyltetrahydrofolate. The sequence is that of Bifunctional protein FolD from Pyrobaculum aerophilum (strain ATCC 51768 / DSM 7523 / JCM 9630 / CIP 104966 / NBRC 100827 / IM2).